The primary structure comprises 953 residues: Atromentin synthetase invA2 (953 aa).

The segment at R38 to V460 is adenylation (A) domain. Residues A592–I670 form the Carrier domain. Residues T597 to D667 are thiolation and peptide carrier (T) domain. O-(pantetheine 4'-phosphoryl)serine is present on S629. Positions P693 to H795 are thioesterase (TE) domain.

Belongs to the ATP-dependent AMP-binding enzyme family.

It participates in secondary metabolite biosynthesis. Its function is as follows. An L-tyrosine:2-oxoglutarate aminotransferase (probably invD) and atromentin synthetase invA2 catalyze consecutive steps to turn over L-tyrosine into atromentin, which represents the generic precursor molecule for the entire terphenylquinone and pulvinic acid family of pigments, which are widely distributed secondary metabolites in homobasidiomycetes. The first step catalyzed by the aminotransferase converts L-tyrosine in to 4-hydroxyphenylpyruvate (4-HPP). Adenylation of two 4-HPP monomers by the invA2 adenylation (A) domain, covalent tethering of the monomers as a thioester and oxoester onto the invA2 thiolation (T) and thioesterase (TE) domains, respectively, and symmetric C-C-bond formation between two monomers catalyzed by the invA2 TE domain leads to atromentin. The chain is Atromentin synthetase invA2 (invA2) from Paxillus involutus (Naked brimcap).